The following is a 388-amino-acid chain: Probable E3 ubiquitin-protein ligase LOG2 (388 aa).

The interval 1–43 (MGNISSSGGEGRRRRRRNHTAAPPPPPPPPSSSLPPPPLPTEI) is disordered. The N-myristoyl glycine moiety is linked to residue Gly2. The segment covering 22–40 (APPPPPPPPSSSLPPPPLP) has biased composition (pro residues). The DAR2 domain stretch occupies residues 159 to 281 (FTFDATVSGR…GEIKIRVVKQ (123 aa)). Residues 319-358 (CVICLSEPRDTTVLPCRHMCMCSGCAKVLRFQTNRCPICR) form an RING-type; atypical zinc finger. Positions 368 to 388 (KVHGNNGSGNNTGQGETVEQE) are disordered.

Belongs to the RING-type zinc finger family. LOG2 subfamily. Interacts with GDU1. In terms of processing, myristoylated (in vitro). As to expression, expressed in the vascular tissues in both phloem and xylem parenchyma cells.

It is found in the cell membrane. It carries out the reaction S-ubiquitinyl-[E2 ubiquitin-conjugating enzyme]-L-cysteine + [acceptor protein]-L-lysine = [E2 ubiquitin-conjugating enzyme]-L-cysteine + N(6)-ubiquitinyl-[acceptor protein]-L-lysine.. It functions in the pathway protein modification; protein ubiquitination. Its function is as follows. Acts as an E3 ubiquitin-protein ligase, or as part of E3 complex, which accepts ubiquitin from specific E2 ubiquitin-conjugating enzymes and then transfers it to substrates (in vitro). Required for GLUTAMINE DUMPER 1(GDU1)-induced amino acid secretion and for amino acid homeostasis. Ubiquitinates GDU1 (in vitro). The sequence is that of Probable E3 ubiquitin-protein ligase LOG2 (LOG2) from Arabidopsis thaliana (Mouse-ear cress).